We begin with the raw amino-acid sequence, 253 residues long: Imidazole glycerol phosphate synthase subunit HisF (253 aa).

Residues D11 and D130 contribute to the active site.

The protein belongs to the HisA/HisF family. Heterodimer of HisH and HisF.

The protein localises to the cytoplasm. The catalysed reaction is 5-[(5-phospho-1-deoxy-D-ribulos-1-ylimino)methylamino]-1-(5-phospho-beta-D-ribosyl)imidazole-4-carboxamide + L-glutamine = D-erythro-1-(imidazol-4-yl)glycerol 3-phosphate + 5-amino-1-(5-phospho-beta-D-ribosyl)imidazole-4-carboxamide + L-glutamate + H(+). It participates in amino-acid biosynthesis; L-histidine biosynthesis; L-histidine from 5-phospho-alpha-D-ribose 1-diphosphate: step 5/9. IGPS catalyzes the conversion of PRFAR and glutamine to IGP, AICAR and glutamate. The HisF subunit catalyzes the cyclization activity that produces IGP and AICAR from PRFAR using the ammonia provided by the HisH subunit. The chain is Imidazole glycerol phosphate synthase subunit HisF from Roseobacter denitrificans (strain ATCC 33942 / OCh 114) (Erythrobacter sp. (strain OCh 114)).